We begin with the raw amino-acid sequence, 338 residues long: Biotin synthase (338 aa).

The Radical SAM core domain maps to 63–290; sequence NGVQLSTLLS…RAKVRLSAGR (228 aa). Residues Cys-78, Cys-82, and Cys-85 each contribute to the [4Fe-4S] cluster site. Residues Cys-122, Cys-153, Cys-213, and Arg-285 each contribute to the [2Fe-2S] cluster site.

This sequence belongs to the radical SAM superfamily. Biotin synthase family. Homodimer. Requires [4Fe-4S] cluster as cofactor. The cofactor is [2Fe-2S] cluster.

It catalyses the reaction (4R,5S)-dethiobiotin + (sulfur carrier)-SH + 2 reduced [2Fe-2S]-[ferredoxin] + 2 S-adenosyl-L-methionine = (sulfur carrier)-H + biotin + 2 5'-deoxyadenosine + 2 L-methionine + 2 oxidized [2Fe-2S]-[ferredoxin]. The protein operates within cofactor biosynthesis; biotin biosynthesis; biotin from 7,8-diaminononanoate: step 2/2. In terms of biological role, catalyzes the conversion of dethiobiotin (DTB) to biotin by the insertion of a sulfur atom into dethiobiotin via a radical-based mechanism. The sequence is that of Biotin synthase from Nitrosomonas eutropha (strain DSM 101675 / C91 / Nm57).